Consider the following 103-residue polypeptide: Large ribosomal subunit protein uL24 (103 aa).

The protein belongs to the universal ribosomal protein uL24 family. In terms of assembly, part of the 50S ribosomal subunit.

One of two assembly initiator proteins, it binds directly to the 5'-end of the 23S rRNA, where it nucleates assembly of the 50S subunit. In terms of biological role, one of the proteins that surrounds the polypeptide exit tunnel on the outside of the subunit. This is Large ribosomal subunit protein uL24 from Pasteurella multocida (strain Pm70).